Consider the following 815-residue polypeptide: Probable AMP deaminase (815 aa).

Residues 5-27 (YALHLAVATLLGASFAAASAYYM) form a helical membrane-spanning segment. Disordered stretches follow at residues 53-116 (LLDA…PVPT) and 144-173 (LLTN…STNM). Low complexity predominate over residues 105–116 (VRPTTPRSPVPT). The span at 159-173 (ASQNGDTKPVPSTNM) shows a compositional bias: polar residues. Zn(2+)-binding residues include histidine 367 and histidine 369. Substrate contacts are provided by residues histidine 369 and 438 to 443 (KFNLKY). Position 635 (histidine 635) interacts with Zn(2+). Glutamate 638 serves as a coordination point for substrate. Histidine 657 functions as the Proton acceptor in the catalytic mechanism. Aspartate 712 is a Zn(2+) binding site. Residue 713-716 (DPLQ) coordinates substrate.

Belongs to the metallo-dependent hydrolases superfamily. Adenosine and AMP deaminases family. In terms of assembly, homodimer. Zn(2+) serves as cofactor.

The protein resides in the membrane. It catalyses the reaction AMP + H2O + H(+) = IMP + NH4(+). It functions in the pathway purine metabolism; IMP biosynthesis via salvage pathway; IMP from AMP: step 1/1. In terms of biological role, AMP deaminase plays a critical role in energy metabolism. The polypeptide is Probable AMP deaminase (AMPD) (Oryza sativa subsp. japonica (Rice)).